Reading from the N-terminus, the 233-residue chain is Membrane steroid-binding protein 2 (233 aa).

A helical transmembrane segment spans residues Ala23–Val43. A Cytochrome b5 heme-binding domain is found at Glu70–Gln167. The interval Glu70–Gln167 is steroid-binding. Composition is skewed to basic and acidic residues over residues Lys169 to Glu181 and Thr202 to Ala224. Residues Lys169–Glu233 are disordered. Thr225 carries the post-translational modification Phosphothreonine.

This sequence belongs to the cytochrome b5 family. MAPR subfamily.

It is found in the cell membrane. The chain is Membrane steroid-binding protein 2 (MSBP2) from Arabidopsis thaliana (Mouse-ear cress).